The following is a 100-amino-acid chain: Large ribosomal subunit protein eL31 (100 aa).

This sequence belongs to the eukaryotic ribosomal protein eL31 family.

In Hyperthermus butylicus (strain DSM 5456 / JCM 9403 / PLM1-5), this protein is Large ribosomal subunit protein eL31.